Consider the following 627-residue polypeptide: Coiled-coil domain-containing protein 22 (627 aa).

The tract at residues 1-321 (MEEADRILIH…VADIPAASQR (321 aa)) is sufficient for interaction with COMMD1. The segment at 1–447 (MEEADRILIH…LQDCRELESS (447 aa)) is sufficicient and required for interaction with CCDC93. Positions 321–384 (RPEQDTRAAQ…SVAEQEQALR (64 aa)) form a coiled coil. A Phosphoserine modification is found at S410. Residues 448 to 535 (RRLVEIQELH…NSLSGKLDRT (88 aa)) are a coiled coil.

It belongs to the CCDC22 family. In terms of assembly, component of the commander complex consisting of the CCC subcomplex and the retriever subcomplex. Component of the CCC (COMMD/CCDC22/CCDC93) subcomplex consisting of COMMD1, COMMD2, COMMD3, COMMD4, COMMD5, COMMD6, COMMD7, COMMD8, COMMD9, COMMD10, CCDC22 and CCDC93. Forms a coiled-coil heterodimer with CCDC22; this heterodimer interacts with the guanine nucleotide exchange factor DENND10; the interaction is direct. Interacts with CUL1, CUL2, CUL3, SKP1, BTRC. Interacts with SNX17 and SNX31. Interacts with CPNE1 and CPNE4.

The protein localises to the endosome. The protein resides in the cytoplasm. It localises to the cytoskeleton. It is found in the microtubule organizing center. Its subcellular location is the centrosome. In terms of biological role, component of the commander complex that is essential for endosomal recycling of transmembrane cargos; the Commander complex is composed of composed of the CCC subcomplex and the retriever subcomplex. Component of the CCC complex, which is involved in the regulation of endosomal recycling of surface proteins, including integrins, signaling receptor and channels. Involved in regulation of NF-kappa-B signaling. Promotes ubiquitination of I-kappa-B-kinase subunit IKBKB and its subsequent proteasomal degradation leading to NF-kappa-B activation; the function may involve association with COMMD8 and a CUL1-dependent E3 ubiquitin ligase complex. May down-regulate NF-kappa-B activity via association with COMMD1 and involving a CUL2-dependent E3 ubiquitin ligase complex. Regulates the cellular localization of COMM domain-containing proteins, such as COMMD1 and COMMD10. Component of the CCC complex, which is involved in the regulation of endosomal recycling of surface proteins, including integrins, signaling receptor and channels. The CCC complex associates with SNX17, retriever and WASH complexes to prevent lysosomal degradation and promote cell surface recycling of numerous cargos such as integrins ITGA5:ITGB1. Plays a role in copper ion homeostasis. Involved in copper-dependent ATP7A trafficking between the trans-Golgi network and vesicles in the cell periphery; the function is proposed to depend on its association within the CCC complex and cooperation with the WASH complex on early endosomes. This Rattus norvegicus (Rat) protein is Coiled-coil domain-containing protein 22.